Consider the following 143-residue polypeptide: Large-conductance mechanosensitive channel (143 aa).

2 consecutive transmembrane segments (helical) span residues 10–30 (FAVKGNVMDLAVGVIIGGAFS) and 89–109 (GSFITVAINFVILAFIIFLMV).

Belongs to the MscL family. As to quaternary structure, homopentamer.

The protein resides in the cell inner membrane. In terms of biological role, channel that opens in response to stretch forces in the membrane lipid bilayer. May participate in the regulation of osmotic pressure changes within the cell. In Burkholderia cenocepacia (strain ATCC BAA-245 / DSM 16553 / LMG 16656 / NCTC 13227 / J2315 / CF5610) (Burkholderia cepacia (strain J2315)), this protein is Large-conductance mechanosensitive channel.